We begin with the raw amino-acid sequence, 314 residues long: Olfactory receptor 5P81 (314 aa).

Residues 1-28 (MAFLEDGNHTVVTEFILLGLTDDPVLRV) lie on the Extracellular side of the membrane. Asn-8 carries an N-linked (GlcNAc...) asparagine glycan. Residues 29–49 (ILFIIILCIYLVTVSGNLSTI) form a helical membrane-spanning segment. The Cytoplasmic segment spans residues 50 to 57 (LLIRVSSQ). A helical transmembrane segment spans residues 58–78 (LHHPMYFFLSHLASIDIAISS). The Extracellular portion of the chain corresponds to 79-102 (SVTPNMVVNFLVERSSISYIGCGI). A disulfide bridge connects residues Cys-100 and Cys-192. The chain crosses the membrane as a helical span at residues 103-123 (QLGSAVFFGAIECFLLAVMAY). At 124-136 (DRFVAICNPLLYS) the chain is on the cytoplasmic side. The chain crosses the membrane as a helical span at residues 137–157 (TKMSKQVCIQLLVGSYIGGFI). The Extracellular portion of the chain corresponds to 158–199 (HASFFTLSFVSFLFCGPNRINHFFCDFTPLVELSCSDNSVLI). The helical transmembrane segment at 200–220 (ILDSFSTGTIIVITVFVIAIS) threads the bilayer. Residues 221–240 (YTCILITILKMHSTEGRHKA) lie on the Cytoplasmic side of the membrane. Residues 241–261 (FSTCTSHLTVVTLLYGTVTFI) form a helical membrane-spanning segment. Residues 262 to 274 (YVMPKSSYSTDQN) lie on the Extracellular side of the membrane. The chain crosses the membrane as a helical span at residues 275 to 295 (KVISVFYMVVIPMLNPIIYSL). The Cytoplasmic portion of the chain corresponds to 296–314 (RNNEIKGALKKQLGEKNIF).

This sequence belongs to the G-protein coupled receptor 1 family.

It localises to the cell membrane. Potential odorant receptor. This Mus musculus (Mouse) protein is Olfactory receptor 5P81.